The following is a 230-amino-acid chain: MGQKINPTGFRLAVTKDWASKWFAKSTDFSTVLKQDIDVRNYLRQKLANASVGRVIIERPAKSARITIHSARPGVVIGKKGEDIEVLKRDLQVLMGVPIHVNIEEIRRPELDAQIIADGIAQQLEKRVQFRRAMKRAMQNAMRSGAKGIKIMTSGRLNGADIARSEWYREGRVPLHTLRANVDYATSEAHTTYGVLGLKVWVYTEGNIKSSKPEHESKQRKAGRRNAAAN.

Positions Val-39–Arg-107 constitute a KH type-2 domain. A disordered region spans residues Ser-210–Asn-230.

Belongs to the universal ribosomal protein uS3 family. Part of the 30S ribosomal subunit. Forms a tight complex with proteins S10 and S14.

Its function is as follows. Binds the lower part of the 30S subunit head. Binds mRNA in the 70S ribosome, positioning it for translation. This is Small ribosomal subunit protein uS3 from Neisseria gonorrhoeae (strain ATCC 700825 / FA 1090).